The chain runs to 154 residues: Bacterial ferritin (154 aa).

A Ferritin-like diiron domain is found at 1–145 (MQGHPEVIDY…QQLGLIARMG (145 aa)). 9 residues coordinate Fe(3+): glutamate 18, histidine 46, glutamate 47, glutamate 50, glutamate 51, histidine 54, glutamate 93, aspartate 129, and histidine 130.

The protein belongs to the bacterioferritin family. The bacterioferritin (BFR) complex is formed of 24 subunits (FtnA and BfrB) arranged as 12 homodimers. The holocomplex contains about 8.7% Fe and 8.0% phosphate. In vivo purifies with BfrB in varying ratios, depending on the O(2) content; as O(2) decreases FtnA content rises. Pure FtnA BFR complexes are not isolated in situ, although in a bfrB deletion some iron will accumulate in FtnA ferritin complexes. Upon crystallization forms homooligomers of 24 subunits, the BFR complex, arranged as 12 dimers, that are packed together to form an approximately spherical molecule with a central cavity, in which large amounts of iron can be deposited. The BFR shell has three- and four-fold pores; Fe(2+) may move in and out of the shell via the four-fold pores. Does not interact with Bfd.

It is found in the cytoplasm. It carries out the reaction 4 Fe(2+) + O2 + 4 H(+) = 4 Fe(3+) + 2 H2O. It catalyses the reaction Fe(2+)(in) = Fe(2+)(out). Its function is as follows. Plays a role in catalase A (katA) expression; activity is required for optimal KatA activity and resistance to H(2)O(2). Iron-storage protein that is part of the heterooligomeric bacterioferritin (BFR) complex. The ferroxidase center binds Fe(2+), oxidizes it using dioxygen to Fe(3+), and participates in subsequent Fe(3+) oxide mineral core formation within the central cavity of the BFR protein shell. Can store up to 520 iron atoms per ferritin protein molecule. Iron release requires only the input of electrons from ferredoxin NADP reductase (FPR), does not require Bfd. Does not bind heme. The chain is Bacterial ferritin from Pseudomonas aeruginosa (strain ATCC 15692 / DSM 22644 / CIP 104116 / JCM 14847 / LMG 12228 / 1C / PRS 101 / PAO1).